A 204-amino-acid polypeptide reads, in one-letter code: HTH-type transcriptional activator BcrR (204 aa).

Residues 1 to 81 (MEFNEKLQQL…ETENRSNLKK (81 aa)) are Cytoplasmic-facing. In terms of domain architecture, HTH cro/C1-type spans 7–61 (LQQLRTGKNLTQEQLAEQLYVSRTAISKWESGKGYPNMESLKCISKFFSVTIDEL). Positions 18-37 (QEQLAEQLYVSRTAISKWES) form a DNA-binding region, H-T-H motif. A helical membrane pass occupies residues 82 to 102 (IYNYIYGILDMMAVAFIFLPL). At 103-126 (YGNSVGGYVYAVNLLSFTATTPFN) the chain is on the extracellular side. A helical transmembrane segment spans residues 127–147 (LAVYWSAFAALIIIGIGKIIS). The Cytoplasmic segment spans residues 148–154 (THLDKEK). Residues 155 to 175 (WGGIATKCSLTITALAVCFFA) form a helical membrane-spanning segment. Over 176–181 (AAREPY) the chain is Extracellular. Residues 182 to 202 (ITVLVFLLLIGKIFVWIKQMG) form a helical membrane-spanning segment. Residues 203 to 204 (MK) are Cytoplasmic-facing.

The protein localises to the cell membrane. Its activity is regulated as follows. Constitutively bound to the bcrABD promoter. Requires bacitracin for activation, probably through a conformational change, such as the oligomerization of inactive dimers to form active tetramers. Functions both as a membrane-bound sensor and a transducer of bacitracin availability to activate transcription of the bcrABD operon in the presence of bacitracin. Binds specifically to two inverted repeat sequences on the bcrABD promoter, irrespective of bacitracin concentration. In Enterococcus faecalis (Streptococcus faecalis), this protein is HTH-type transcriptional activator BcrR.